The sequence spans 128 residues: Large ribosomal subunit protein bL17 (128 aa).

This sequence belongs to the bacterial ribosomal protein bL17 family. As to quaternary structure, part of the 50S ribosomal subunit. Contacts protein L32.

The chain is Large ribosomal subunit protein bL17 from Pseudomonas fluorescens (strain ATCC BAA-477 / NRRL B-23932 / Pf-5).